Reading from the N-terminus, the 266-residue chain is Diphthine synthase (266 aa).

Residues L9, D84, V87, 112–113 (SI), L169, A210, and H235 contribute to the S-adenosyl-L-methionine site.

The protein belongs to the diphthine synthase family. As to quaternary structure, homodimer.

It catalyses the reaction 2-[(3S)-amino-3-carboxypropyl]-L-histidyl-[translation elongation factor 2] + 3 S-adenosyl-L-methionine = diphthine-[translation elongation factor 2] + 3 S-adenosyl-L-homocysteine + 3 H(+). Its pathway is protein modification; peptidyl-diphthamide biosynthesis. S-adenosyl-L-methionine-dependent methyltransferase that catalyzes the trimethylation of the amino group of the modified target histidine residue in translation elongation factor 2 (EF-2), to form an intermediate called diphthine. The three successive methylation reactions represent the second step of diphthamide biosynthesis. This chain is Diphthine synthase, found in Methanosarcina acetivorans (strain ATCC 35395 / DSM 2834 / JCM 12185 / C2A).